The chain runs to 355 residues: Probable nitronate monooxygenase (355 aa).

FMN-binding positions include Asn71, Gln175, Gly180, Gly218, and 237–240 (QMGT).

The protein belongs to the nitronate monooxygenase family. NMO class I subfamily. The cofactor is FMN.

It carries out the reaction 3 propionate 3-nitronate + 3 O2 + H2O = 3 3-oxopropanoate + 2 nitrate + nitrite + H2O2 + 3 H(+). In terms of biological role, nitronate monooxygenase that uses molecular oxygen to catalyze the oxidative denitrification of alkyl nitronates. Acts on propionate 3-nitronate (P3N), the presumed physiological substrate. Probably functions in the detoxification of P3N, a metabolic poison produced by plants and fungi as a defense mechanism. The chain is Probable nitronate monooxygenase from Staphylococcus aureus (strain USA300).